The chain runs to 368 residues: G-protein coupled receptor 62 (368 aa).

Residues Met1–Leu18 are Extracellular-facing. Residues Asn3 and Asn8 are each glycosylated (N-linked (GlcNAc...) asparagine). The helical transmembrane segment at Ile19–Val39 threads the bilayer. The Cytoplasmic portion of the chain corresponds to Leu40–His53. A helical membrane pass occupies residues Leu54–Pro74. At Pro75–Ala91 the chain is on the extracellular side. The chain crosses the membrane as a helical span at residues Arg92 to Ala112. Over Arg113 to Pro129 the chain is Cytoplasmic. A helical transmembrane segment spans residues Val130–Gly150. Topologically, residues Thr151–Ala177 are extracellular. Residues Leu178 to Val198 traverse the membrane as a helical segment. At Ala199–Ala239 the chain is on the cytoplasmic side. Residues Ala240 to Ala260 traverse the membrane as a helical segment. At Cys261–Glu272 the chain is on the extracellular side. Residues Ala273–Leu293 traverse the membrane as a helical segment. The Cytoplasmic portion of the chain corresponds to Gln294–Ser368. The disordered stretch occupies residues Arg332–Ser368.

The protein belongs to the G-protein coupled receptor 1 family. In terms of assembly, homodimers. Forms heterodimer with MTNR1B. Interacts with ARRB1 and ARRB2 in a spontaneous and agonist-independent manner; leading to the internalization of GPR62 in the endosomal compartment. In terms of tissue distribution, expressed in brain; detected in the basal forebrain, frontal cortex, caudate, putamen, thalamus and hippocampus.

It localises to the cell membrane. It is found in the endosome membrane. Orphan G-protein coupled receptor. Constitutively activates the G(q/11)/inositol phosphate and the G(s)-alpha/cAMP signaling pathways. Has spontaneous activity for beta-arrestin recruitment. Shows a reciprocal modulation of signaling functions with the melatonin receptor MTNR1B most likely through receptor heteromerization. The protein is G-protein coupled receptor 62 (GPR62) of Homo sapiens (Human).